Consider the following 176-residue polypeptide: Epididymal-specific lipocalin-9 (176 aa).

The signal sequence occupies residues 1-15; sequence MALLLLSLGLSLIAA. N-linked (GlcNAc...) asparagine glycans are attached at residues Asn68 and Asn129. Residues Cys83 and Cys161 are joined by a disulfide bond.

The protein belongs to the calycin superfamily. Lipocalin family.

It localises to the secreted. The protein is Epididymal-specific lipocalin-9 of Homo sapiens (Human).